The following is a 146-amino-acid chain: Angiogenin (146 aa).

Residues methionine 1–alanine 24 form the signal peptide. The residue at position 25 (glutamine 25) is a Pyrrolidone carboxylic acid. Catalysis depends on histidine 37, which acts as the Proton acceptor. Arginine 45 provides a ligand contact to tRNA. Cystine bridges form between cysteine 50-cysteine 105, cysteine 63-cysteine 116, and cysteine 81-cysteine 131. Residues arginine 55–leucine 59 carry the Nucleolar localization signal motif. Residues cysteine 105 and isoleucine 127 each contribute to the tRNA site. The active-site Proton donor is histidine 138.

It belongs to the pancreatic ribonuclease family. In terms of assembly, homodimer. Interacts with RNH1; inhibiting ANG ribonuclease activity. Interacts with PCNA.

It is found in the secreted. Its subcellular location is the nucleus. It localises to the nucleolus. The protein resides in the cytoplasm. The protein localises to the stress granule. Has weak tRNA ribonuclease activity by itself due to partial autoinhibition by its C-terminus, which folds into a short alpha-helix that partially occludes the substrate-binding site. In absence of stress, the ribonuclease activity is inhibited by RNH1 in the cytoplasm. In response to stress, dissociates from RNH1 in the cytoplasm and associates with cytoplasmic ribosomes with vacant A-sites: ribosomes directly activate the tRNA ribonuclease activity of ANG by refolding the C-terminal alpha-helix. In response to stress, the angiogenic activity of ANG is inhibited by RNH1 in the nucleus. Secreted ribonuclease that can either promote or restrict cell proliferation of target cells, depending on the context. Endocytosed in target cells via its receptor PLXNB2 and translocates to the cytoplasm or nucleus. Under stress conditions, localizes to the cytoplasm and promotes the assembly of stress granules (SGs): specifically cleaves a subset of tRNAs within anticodon loops to produce tRNA-derived stress-induced fragments (tiRNAs), resulting in translation repression and inhibition of cell proliferation. tiRNas also prevent formation of apoptosome, thereby promoting cell survival. Preferentially cleaves RNAs between a pyrimidine and an adenosine residue, suggesting that it cleaves the anticodon loop of tRNA(Ala) (32-UUAGCAU-38) after positions 33 and 36. Cleaves a subset of tRNAs, including tRNA(Ala), tRNA(Glu), tRNA(Gly), tRNA(Lys), tRNA(Val), tRNA(His), tRNA(Asp) and tRNA(Sec). Under growth conditions and in differentiated cells, translocates to the nucleus and stimulates ribosomal RNA (rRNA) transcription, including that containing the initiation site sequences of 45S rRNA, thereby promoting cell growth and proliferation. Angiogenin induces vascularization of normal and malignant tissues via its ability to promote rRNA transcription. Involved in hematopoietic stem and progenitor cell (HSPC) growth and survival by promoting rRNA transcription in growth conditions and inhibiting translation in response to stress, respectively. Mediates the crosstalk between myeloid and intestinal epithelial cells to protect the intestinal epithelial barrier integrity: secreted by myeloid cells and promotes intestinal epithelial cells proliferation and survival. Also mediates osteoclast-endothelial cell crosstalk in growing bone: produced by osteoclasts and protects the neighboring vascular cells against senescence by promoting rRNA transcription. The protein is Angiogenin (ANG) of Macaca mulatta (Rhesus macaque).